The sequence spans 483 residues: V-type proton ATPase subunit B 2 (483 aa).

It belongs to the ATPase alpha/beta chains family. As to quaternary structure, V-ATPase is a heteromultimeric enzyme composed of a peripheral catalytic V1 complex (main components: subunits A, B, C, D, E, and F) attached to an integral membrane V0 proton pore complex (main component: the proteolipid protein).

Non-catalytic subunit of the peripheral V1 complex of vacuolar ATPase. V-ATPase is responsible for acidifying a variety of intracellular compartments in eukaryotic cells. The chain is V-type proton ATPase subunit B 2 from Hordeum vulgare (Barley).